Consider the following 419-residue polypeptide: Maltoporin 2 (419 aa).

The first 23 residues, methionine 1–alanine 23, serve as a signal peptide directing secretion.

This sequence belongs to the porin LamB (TC 1.B.3) family. As to quaternary structure, homotrimer formed of three 18-stranded antiparallel beta-barrels, containing three independent channels.

It localises to the cell outer membrane. It carries out the reaction beta-maltose(in) = beta-maltose(out). Involved in the transport of maltose and maltodextrins. The sequence is that of Maltoporin 2 from Yersinia pseudotuberculosis serotype O:1b (strain IP 31758).